A 494-amino-acid polypeptide reads, in one-letter code: Bifunctional pantoate ligase/cytidylate kinase (494 aa).

The segment at 1 to 258 (MHFVPTMGGL…CGSTRLIDHA (258 aa)) is pantoate--beta-alanine ligase. An ATP-binding site is contributed by 7-14 (MGGLHHGH). H14 (proton donor) is an active-site residue. Q41 is a binding site for (R)-pantoate. Residue Q41 coordinates beta-alanine. 130 to 133 (GEKD) is an ATP binding site. Q136 lines the (R)-pantoate pocket. ATP contacts are provided by residues V159 and 167-170 (SSSR). The interval 259-494 (FLMTRSPLVA…VGEEVWPTPV (236 aa)) is cytidylate kinase.

The protein in the N-terminal section; belongs to the pantothenate synthetase family. It in the C-terminal section; belongs to the cytidylate kinase family. Type 1 subfamily.

The protein resides in the cytoplasm. It carries out the reaction (R)-pantoate + beta-alanine + ATP = (R)-pantothenate + AMP + diphosphate + H(+). The catalysed reaction is CMP + ATP = CDP + ADP. The enzyme catalyses dCMP + ATP = dCDP + ADP. The protein operates within cofactor biosynthesis; (R)-pantothenate biosynthesis; (R)-pantothenate from (R)-pantoate and beta-alanine: step 1/1. Its function is as follows. Catalyzes the condensation of pantoate with beta-alanine in an ATP-dependent reaction via a pantoyl-adenylate intermediate. Catalyzes the transfer of a phosphate group from ATP to either CMP or dCMP to form CDP or dCDP and ADP, respectively. The polypeptide is Bifunctional pantoate ligase/cytidylate kinase (Synechococcus sp. (strain CC9311)).